Reading from the N-terminus, the 278-residue chain is Bis(5'-nucleosyl)-tetraphosphatase, symmetrical (278 aa).

The protein belongs to the Ap4A hydrolase family.

The enzyme catalyses P(1),P(4)-bis(5'-adenosyl) tetraphosphate + H2O = 2 ADP + 2 H(+). Its function is as follows. Hydrolyzes diadenosine 5',5'''-P1,P4-tetraphosphate to yield ADP. The polypeptide is Bis(5'-nucleosyl)-tetraphosphatase, symmetrical (Methylococcus capsulatus (strain ATCC 33009 / NCIMB 11132 / Bath)).